A 316-amino-acid polypeptide reads, in one-letter code: Pantothenate kinase (316 aa).

95 to 102 (GSVAVGKS) contacts ATP.

It belongs to the prokaryotic pantothenate kinase family.

Its subcellular location is the cytoplasm. The catalysed reaction is (R)-pantothenate + ATP = (R)-4'-phosphopantothenate + ADP + H(+). It participates in cofactor biosynthesis; coenzyme A biosynthesis; CoA from (R)-pantothenate: step 1/5. The chain is Pantothenate kinase from Klebsiella pneumoniae (strain 342).